The following is a 154-amino-acid chain: Acidic phospholipase A2 1 (154 aa).

Residues 1 to 19 (MHPAHLLVLLGVCVSLLGA) form the signal peptide. Positions 20–27 (ARIPPLPL) are excised as a propeptide. 7 disulfides stabilise this stretch: Cys38–Cys104, Cys54–Cys153, Cys56–Cys72, Cys71–Cys132, Cys78–Cys125, Cys88–Cys118, and Cys111–Cys123. The Ca(2+) site is built by Phe55, Gly57, and Gly59. His75 is a catalytic residue. Ca(2+) is bound at residue Asp76. The active site involves Asp126.

This sequence belongs to the phospholipase A2 family. Group I subfamily. D49 sub-subfamily. As to quaternary structure, monomer. The cofactor is Ca(2+). As to expression, expressed by the venom gland.

The protein localises to the secreted. The enzyme catalyses a 1,2-diacyl-sn-glycero-3-phosphocholine + H2O = a 1-acyl-sn-glycero-3-phosphocholine + a fatty acid + H(+). Snake venom phospholipase A2 (PLA2) that shows moderate enzymatic activity and exhibits procoagulant activity. PLA2 catalyzes the calcium-dependent hydrolysis of the 2-acyl groups in 3-sn-phosphoglycerides. The polypeptide is Acidic phospholipase A2 1 (Pseudonaja textilis (Eastern brown snake)).